Reading from the N-terminus, the 234-residue chain is Peptidase E (234 aa).

Catalysis depends on charge relay system residues Ser123, Asp138, and His160.

Belongs to the peptidase S51 family.

The protein localises to the cytoplasm. It catalyses the reaction Dipeptidase E catalyzes the hydrolysis of dipeptides Asp-|-Xaa. It does not act on peptides with N-terminal Glu, Asn or Gln, nor does it cleave isoaspartyl peptides.. Functionally, hydrolyzes dipeptides containing N-terminal aspartate residues. May play a role in allowing the cell to use peptide aspartate to spare carbon otherwise required for the synthesis of the aspartate family of amino acids. The protein is Peptidase E of Actinobacillus pleuropneumoniae serotype 7 (strain AP76).